The chain runs to 421 residues: Enolase 1 (421 aa).

Residue glutamine 164 participates in (2R)-2-phosphoglycerate binding. The active-site Proton donor is glutamate 206. Mg(2+)-binding residues include aspartate 243, glutamate 287, and aspartate 314. Residues lysine 339, arginine 368, serine 369, and lysine 390 each coordinate (2R)-2-phosphoglycerate. The active-site Proton acceptor is lysine 339.

The protein belongs to the enolase family. In terms of assembly, component of the RNA degradosome, a multiprotein complex involved in RNA processing and mRNA degradation. Mg(2+) is required as a cofactor.

Its subcellular location is the cytoplasm. It is found in the secreted. The protein resides in the cell surface. The enzyme catalyses (2R)-2-phosphoglycerate = phosphoenolpyruvate + H2O. The protein operates within carbohydrate degradation; glycolysis; pyruvate from D-glyceraldehyde 3-phosphate: step 4/5. Catalyzes the reversible conversion of 2-phosphoglycerate (2-PG) into phosphoenolpyruvate (PEP). It is essential for the degradation of carbohydrates via glycolysis. The polypeptide is Enolase 1 (Methylococcus capsulatus (strain ATCC 33009 / NCIMB 11132 / Bath)).